We begin with the raw amino-acid sequence, 351 residues long: Molybdenum import ATP-binding protein ModC (351 aa).

In terms of domain architecture, ABC transporter spans 1 to 229 (MLKINVKKQL…PLFLPWKLED (229 aa)). 31–38 (GLSGSGKT) contacts ATP. One can recognise a Mop domain in the interval 289–351 (KTSIRNILHG…FAQIKAVSVL (63 aa)).

The protein belongs to the ABC transporter superfamily. Molybdate importer (TC 3.A.1.8) family. In terms of assembly, the complex is composed of two ATP-binding proteins (ModC), two transmembrane proteins (ModB) and a solute-binding protein (ModA).

It is found in the cell inner membrane. It catalyses the reaction molybdate(out) + ATP + H2O = molybdate(in) + ADP + phosphate + H(+). In terms of biological role, part of the ABC transporter complex ModABC involved in molybdenum import. Responsible for energy coupling to the transport system. The polypeptide is Molybdenum import ATP-binding protein ModC (Pasteurella multocida (strain Pm70)).